The following is a 642-amino-acid chain: Polyglycine hydrolase (642 aa).

Residues 1 to 23 form the signal peptide; it reads MYTSRLLLSNLASCLSLATLVAS. Asn37, Asn100, Asn159, and Asn341 each carry an N-linked (GlcNAc...) asparagine glycan. Cysteines 149 and 183 form a disulfide. The active site involves Ser370. Asn390, Asn407, Asn444, Asn487, and Asn494 each carry an N-linked (GlcNAc...) asparagine glycan.

The protein belongs to the peptidase S12 family.

It is found in the secreted. The catalysed reaction is a glycyl-glycyl-[protein] + H2O = N-terminal glycyl-[protein] + [protein]-C-terminal glycine. With respect to regulation, not inhibited by phenylmethylsulfonyl fluoride (PMSF; serine peptidase class S1 inhibitor), clavulanic acid (beta-lactamase inhibitor) or ampicillin (penicillin-binding protein (PBP) inhibitor). In terms of biological role, serine-type endopeptidase that cleaves Gly-Gly bonds in the polyglycine linker of host plant class IV chitinases to disrupt their chitin-binding, and thereby plays a role in lowering the defense responses of the host to the fungus. Degrades Z.mays Endochitinase A (CHIA). Degrades Z.mays Endochitinase B (CHIB). Has no activity on Z.mays CHIA following CHIA cleavage by fungalysin. This is Polyglycine hydrolase from Epicoccum sorghinum (Endophyte fungus).